The following is a 506-amino-acid chain: Deoxyguanosinetriphosphate triphosphohydrolase (506 aa).

The HD domain occupies 66–274 (RLTHSLEVQQ…MEAADDISYC (209 aa)).

Belongs to the dGTPase family. Type 1 subfamily. In terms of assembly, homotetramer. Mg(2+) serves as cofactor.

The catalysed reaction is dGTP + H2O = 2'-deoxyguanosine + triphosphate + H(+). DGTPase preferentially hydrolyzes dGTP over the other canonical NTPs. This is Deoxyguanosinetriphosphate triphosphohydrolase from Yersinia pseudotuberculosis serotype O:3 (strain YPIII).